The chain runs to 476 residues: MSYNTGKESSPVSPLKKRRASWSELWVNHHHLLSSSPLDLAAKFQSLTPPISKSKTLLPDFTLLLPDLILIRVIQKIPNSQRKNLSLVCKRWFRLHGRLVRSFKVSDWEFLSSGRLISRFPNLETVDLVSGCLISPPNLGILVNHRIVSFTVGVGSYQSWSFFEENLLSVELVERGLKALAGGCSNLRKLVVTNTSELGLLNVAEECSRLQELELHKCSDSVLLGIGAFENLQILRLVGNVDGLYNSLVSDIGLMILAQGCKRLVKLELVGCEGGFDGIKEIGECCQMLEELTVCDNKMESGWLGGLRYCENLKTLKLVSCKKIDNDPDESLSCCCPALERLQLEKCQLRDKNTVKALFKMCEAAREIVFQDCWGLDNDIFSLAMAFGRVKLLYLEGCSLLTTSGLESVILHWHELEHLKVVSCKNIKDSEVSPSLSALFSALVELQWRPDTRSHLSSSLTGTGIGEKGGKFFKKT.

Positions 59-111 (PDFTLLLPDLILIRVIQKIPNSQRKNLSLVCKRWFRLHGRLVRSFKVSDWEFL) constitute an F-box domain.

This chain is F-box protein At5g07670, found in Arabidopsis thaliana (Mouse-ear cress).